The primary structure comprises 430 residues: Adenylosuccinate synthetase (430 aa).

GTP-binding positions include 12 to 18 (GDEGKGK) and 40 to 42 (GHT). Aspartate 13 serves as the catalytic Proton acceptor. Mg(2+) is bound by residues aspartate 13 and glycine 40. Residues 13-16 (DEGK), 38-41 (NAGH), threonine 130, arginine 144, glutamine 224, threonine 239, and arginine 303 contribute to the IMP site. Histidine 41 functions as the Proton donor in the catalytic mechanism. Residue 299–305 (TVTGRKR) participates in substrate binding. GTP is bound by residues arginine 305, 331–333 (KLD), and 413–415 (STS).

This sequence belongs to the adenylosuccinate synthetase family. As to quaternary structure, homodimer. Mg(2+) is required as a cofactor.

It localises to the cytoplasm. The catalysed reaction is IMP + L-aspartate + GTP = N(6)-(1,2-dicarboxyethyl)-AMP + GDP + phosphate + 2 H(+). The protein operates within purine metabolism; AMP biosynthesis via de novo pathway; AMP from IMP: step 1/2. Functionally, plays an important role in the de novo pathway of purine nucleotide biosynthesis. Catalyzes the first committed step in the biosynthesis of AMP from IMP. This is Adenylosuccinate synthetase from Paracoccus denitrificans (strain Pd 1222).